A 558-amino-acid polypeptide reads, in one-letter code: Potassium-transporting ATPase potassium-binding subunit 2 (558 aa).

The next 12 membrane-spanning stretches (helical) occupy residues 1 to 21 (MSIV…SRYL), 60 to 80 (IKHF…LLLI), 129 to 149 (VITF…IAML), 169 to 189 (FIVR…ISQG), 246 to 266 (WSNY…VFLF), 281 to 301 (IMIF…CLYF), 326 to 346 (FGIG…TGTV), 353 to 373 (LTPL…VFGG), 376 to 396 (VGLM…SLMI), 415 to 435 (IALS…LAFI), 485 to 505 (IVML…VSSL), and 523 to 543 (LFFS…TFLP).

It belongs to the KdpA family. The system is composed of three essential subunits: KdpA, KdpB and KdpC.

The protein localises to the cell membrane. In terms of biological role, part of the high-affinity ATP-driven potassium transport (or Kdp) system, which catalyzes the hydrolysis of ATP coupled with the electrogenic transport of potassium into the cytoplasm. This subunit binds the extracellular potassium ions and delivers the ions to the membrane domain of KdpB through an intramembrane tunnel. The chain is Potassium-transporting ATPase potassium-binding subunit 2 from Staphylococcus aureus (strain Mu50 / ATCC 700699).